The sequence spans 572 residues: DBH-like monooxygenase protein 2 homolog (572 aa).

The N-terminal stretch at 1–26 (MGTCLKGNMSVLSLVLFLLSVQQFWA) is a signal peptide. N8, N64, N187, and N203 each carry an N-linked (GlcNAc...) asparagine glycan. Over 27–552 (QEDPLLPFSE…SPPEPCVRAC (526 aa)) the chain is Extracellular. In terms of domain architecture, DOMON spans 42–157 (HNVQLKWGFD…LPMKLIYAYG (116 aa)). Y207 is a catalytic residue. 2 disulfide bridges follow: C209-C256 and C244-C263. Residues H237 and H238 each contribute to the Cu cation site. Residue H301 participates in Cu cation binding. A glycan (N-linked (GlcNAc...) asparagine) is linked at N306. 2 disulfide bridges follow: C358–C472 and C435–C457. H381 is an active-site residue. Cu cation contacts are provided by H381, H383, and M456. N-linked (GlcNAc...) asparagine glycosylation is found at N468, N503, N518, and N534. A helical transmembrane segment spans residues 553–571 (ATKNLAFMSLFLCLAGMWA). Residue S572 is a topological domain, cytoplasmic.

This sequence belongs to the copper type II ascorbate-dependent monooxygenase family. The cofactor is Cu(2+).

The protein localises to the membrane. This Danio rerio (Zebrafish) protein is DBH-like monooxygenase protein 2 homolog (moxd2).